Consider the following 432-residue polypeptide: D-amino acid dehydrogenase (432 aa).

Residue 3–17 (VVVLGSGVVGVTSAW) participates in FAD binding.

The protein belongs to the DadA oxidoreductase family. The cofactor is FAD.

The enzyme catalyses a D-alpha-amino acid + A + H2O = a 2-oxocarboxylate + AH2 + NH4(+). It participates in amino-acid degradation; D-alanine degradation; NH(3) and pyruvate from D-alanine: step 1/1. Oxidative deamination of D-amino acids. This is D-amino acid dehydrogenase from Enterobacter sp. (strain 638).